Consider the following 366-residue polypeptide: Flagellar P-ring protein (366 aa).

A signal peptide spans 1 to 20 (MVIKFLSALILLLVTTAAQA).

The protein belongs to the FlgI family. As to quaternary structure, the basal body constitutes a major portion of the flagellar organelle and consists of four rings (L,P,S, and M) mounted on a central rod.

It localises to the periplasm. Its subcellular location is the bacterial flagellum basal body. Its function is as follows. Assembles around the rod to form the L-ring and probably protects the motor/basal body from shearing forces during rotation. The sequence is that of Flagellar P-ring protein from Escherichia coli (strain SE11).